Consider the following 421-residue polypeptide: MDNISTTVNLSDPPKNSIFNKDQVDVVLYHGYCSDGFGSAFIIWYYFKTRYGLEVADKIMYIPCYHQKDLQNFSLEFLDKIRNKNVIMCDFSYKYHLLMEIINVSNTFIVLDHHKTAQIELSKIPNDLKIFCLEKSGVGITWEYFFPDKPIPKFLAHIQDRDIWTYKVPQTSEFITYFYEQEFDFNLWETFLEEQIVDKAIDCGSKWLEYQKIIMSKIIKRTSYVIQNVNNKLSIVLYCNSPEFKSDLGNRLLYHFPFGDFSCVWDYSLYKDESYYSLRSTNDRYDVSVIATQFGGGGHRNASGLAFSGIKGCLPFEKVDDCGLLELFSQSTKGTIDLGEKHSCILFKTKEIRSEWFEQKYTDLIRRKYTNYIYLAFEISDTDKNYTVFQNDKFSLDNITKYTLDEFSKIFQPLNSINSTN.

This is an uncharacterized protein from Acanthamoeba polyphaga (Amoeba).